The following is a 163-amino-acid chain: MNLNATILGQALSFILFVWFCMKYIWPPIIFAIETRQKNIEESLISLKKAEEELIIIQKKMNQIIQDSKEKASFIINEANKKKSIILEDAKSIALEESKKIFLRNQLEIDLKVMQVRKNLHKEIVDLSILIAEKIIKDNIQKDQYKYSIKKLIVSLSKDKKLI.

A helical membrane pass occupies residues 13-33 (SFILFVWFCMKYIWPPIIFAI).

It belongs to the ATPase B chain family. In terms of assembly, F-type ATPases have 2 components, F(1) - the catalytic core - and F(0) - the membrane proton channel. F(1) has five subunits: alpha(3), beta(3), gamma(1), delta(1), epsilon(1). F(0) has three main subunits: a(1), b(2) and c(10-14). The alpha and beta chains form an alternating ring which encloses part of the gamma chain. F(1) is attached to F(0) by a central stalk formed by the gamma and epsilon chains, while a peripheral stalk is formed by the delta and b chains.

The protein localises to the cell membrane. In terms of biological role, f(1)F(0) ATP synthase produces ATP from ADP in the presence of a proton or sodium gradient. F-type ATPases consist of two structural domains, F(1) containing the extramembraneous catalytic core and F(0) containing the membrane proton channel, linked together by a central stalk and a peripheral stalk. During catalysis, ATP synthesis in the catalytic domain of F(1) is coupled via a rotary mechanism of the central stalk subunits to proton translocation. Its function is as follows. Component of the F(0) channel, it forms part of the peripheral stalk, linking F(1) to F(0). The polypeptide is ATP synthase subunit b (Buchnera aphidicola subsp. Schizaphis graminum (strain Sg)).